A 446-amino-acid chain; its full sequence is ATP-dependent RNA helicase SUB2 (446 aa).

Ser2 carries the N-acetylserine modification. Ser13 and Ser37 each carry phosphoserine. The segment covering 23–41 (ASKAAEAGETGAATSATEG) has biased composition (low complexity). Residues 23 to 52 (ASKAAEAGETGAATSATEGDNNNNTAAGDK) are disordered. A Q motif motif is present at residues 62-90 (TGFKDFLLKPELSRAIIDCGFEHPSEVQQ). One can recognise a Helicase ATP-binding domain in the interval 93-268 (IPQSIHGTDV…RRFLQNPLEI (176 aa)). 106–113 (AKSGLGKT) serves as a coordination point for ATP. At Thr169 the chain carries Phosphothreonine. A DECD box motif is present at residues 215–218 (DECD). One can recognise a Helicase C-terminal domain in the interval 280–441 (GLQQYYIKLE…EFPEEGIDPS (162 aa)).

Belongs to the DEAD box helicase family. DECD subfamily. In terms of assembly, component of the TREX complex composed of at least SUB2, TEX1, YRA1 and the four THO complex components: HPR1, MFT1, THO2 and THP1. Interacts with HPR1, YRA1, and YRA2. SUB2 may mediate the interaction between the THO complex and YRA1. Associates with growing mRNP complexes during transcription. This association requires the presence of HPR1. Also interacts with SAC3. Interacts with THO1 in the presence of RNA; this interaction facilitates RNA binding of SUB2.

Its subcellular location is the nucleus. It catalyses the reaction ATP + H2O = ADP + phosphate + H(+). Functionally, ATP-binding RNA helicase component of the TREX complex involved in transcription elongation and required for the export of mRNA out of the nucleus. SUB2 also plays a role in pre-mRNA splicing and spliceosome assembly. May be involved in rDNA and telomeric silencing, and maintenance of genome integrity. Associates with THO1, which facilitates RNA binding of SUB2 and likely plays a role in mRNA export. This Saccharomyces cerevisiae (strain ATCC 204508 / S288c) (Baker's yeast) protein is ATP-dependent RNA helicase SUB2 (SUB2).